We begin with the raw amino-acid sequence, 499 residues long: Alpha-amylase A type-1/2 (499 aa).

Positions 1 to 21 (MMVAWWSLFLYGLQVAAPALA) are cleaved as a signal peptide. Cys51 and Cys59 form a disulfide bridge. Substrate is bound by residues Gln56 and Trp104. Ca(2+) is bound at residue Asn142. A substrate-binding site is contributed by His143. The cysteines at positions 171 and 185 are disulfide-linked. Positions 183 and 196 each coordinate Ca(2+). Asn218 carries N-linked (GlcNAc...) asparagine glycosylation. Arg225 provides a ligand contact to substrate. The Ca(2+) site is built by Asp227, His231, and Glu251. The active-site Nucleophile is the Asp227. Position 230-231 (230-231 (KH)) interacts with substrate. The active-site Proton donor is the Glu251. Gly255 is a substrate binding site. The cysteines at positions 261 and 304 are disulfide-linked. Residues Asp318 and Arg365 each contribute to the substrate site. A disulfide bond links Cys461 and Cys496.

It belongs to the glycosyl hydrolase 13 family. In terms of assembly, monomer. Ca(2+) is required as a cofactor.

It localises to the secreted. The catalysed reaction is Endohydrolysis of (1-&gt;4)-alpha-D-glucosidic linkages in polysaccharides containing three or more (1-&gt;4)-alpha-linked D-glucose units.. This chain is Alpha-amylase A type-1/2 (amy1), found in Aspergillus oryzae (strain ATCC 42149 / RIB 40) (Yellow koji mold).